A 638-amino-acid chain; its full sequence is RNA exonuclease 3 (638 aa).

Residues alanine 37–leucine 136 form a disordered region. The span at leucine 55–aspartate 76 shows a compositional bias: basic and acidic residues. The span at serine 77 to threonine 111 shows a compositional bias: polar residues. The Exonuclease domain occupies isoleucine 408–leucine 584. Residues aspartate 612–threonine 622 show a composition bias toward polar residues. A disordered region spans residues aspartate 612–serine 638.

It belongs to the REXO1/REXO3 family.

Its subcellular location is the cytoplasm. It localises to the nucleus. Its function is as follows. 3' to 5' exoribonuclease required for proper 3' end maturation of MRP RNA and of the U5L snRNA. In Emericella nidulans (strain FGSC A4 / ATCC 38163 / CBS 112.46 / NRRL 194 / M139) (Aspergillus nidulans), this protein is RNA exonuclease 3 (rex3).